Here is a 462-residue protein sequence, read N- to C-terminus: Argininosuccinate lyase (462 aa).

The protein belongs to the lyase 1 family. Argininosuccinate lyase subfamily.

The protein resides in the cytoplasm. The catalysed reaction is 2-(N(omega)-L-arginino)succinate = fumarate + L-arginine. It functions in the pathway amino-acid biosynthesis; L-arginine biosynthesis; L-arginine from L-ornithine and carbamoyl phosphate: step 3/3. This Caldicellulosiruptor saccharolyticus (strain ATCC 43494 / DSM 8903 / Tp8T 6331) protein is Argininosuccinate lyase.